The sequence spans 152 residues: Superoxide dismutase [Cu-Zn] 4A (152 aa).

Positions 45, 47, and 62 each coordinate Cu cation. A disulfide bridge links Cys56 with Cys145. Residues His62, His70, His79, and Asp82 each coordinate Zn(2+). His119 is a Cu cation binding site.

Belongs to the Cu-Zn superoxide dismutase family. Homodimer. Cu cation is required as a cofactor. It depends on Zn(2+) as a cofactor.

It is found in the cytoplasm. The catalysed reaction is 2 superoxide + 2 H(+) = H2O2 + O2. Destroys radicals which are normally produced within the cells and which are toxic to biological systems. This chain is Superoxide dismutase [Cu-Zn] 4A (SODCC.3), found in Zea mays (Maize).